Consider the following 270-residue polypeptide: Glucosamine-6-phosphate deaminase (270 aa).

Asp-72 (proton acceptor; for enolization step) is an active-site residue. Asp-141 acts as the For ring-opening step in catalysis. The active-site Proton acceptor; for ring-opening step is the His-143. The For ring-opening step role is filled by Glu-148.

Belongs to the glucosamine/galactosamine-6-phosphate isomerase family. NagB subfamily. In terms of assembly, homohexamer.

It carries out the reaction alpha-D-glucosamine 6-phosphate + H2O = beta-D-fructose 6-phosphate + NH4(+). It functions in the pathway amino-sugar metabolism; N-acetylneuraminate degradation; D-fructose 6-phosphate from N-acetylneuraminate: step 5/5. With respect to regulation, allosterically activated by N-acetylglucosamine 6-phosphate (GlcNAc6P). In terms of biological role, catalyzes the reversible isomerization-deamination of glucosamine 6-phosphate (GlcN6P) to form fructose 6-phosphate (Fru6P) and ammonium ion. This Haemophilus influenzae (strain 86-028NP) protein is Glucosamine-6-phosphate deaminase.